The chain runs to 128 residues: Disintegrin EO4A (128 aa).

An N-terminal signal peptide occupies residues 1–20 (MIPVLLVTICLAVFPFQGSS). Residues 21-47 (IILESGNINDYEIVYPKKVNVLPTGAM) constitute a propeptide that is removed on maturation. Residues 26 to 112 (GNINDYEIVY…DCPRNPYKGK (87 aa)) form the Disintegrin domain. 4 disulfides stabilise this stretch: Cys-53–Cys-76, Cys-67–Cys-73, Cys-72–Cys-97, and Cys-85–Cys-104. Residues 89-91 (RGD) carry the Cell attachment site motif. Positions 115 to 128 (PMKWPAAAKGSVLM) are excised as a propeptide.

Belongs to the disintegrin family. Dimeric disintegrin subfamily. In terms of assembly, heterodimer with EO5B; disulfide-linked. As to expression, expressed by the venom gland.

The protein localises to the secreted. In terms of biological role, poor inhibitor of platelet aggregation. The disintegrin inhibits the adhesion of cells expressing the RGD-dependent integrin alpha-5/beta-1 (ITGA5/ITGB1) to immobilized fibronectin. Inhibition on alpha-2b/beta-3 (ITGA2B/ITGB3) is low. The protein is Disintegrin EO4A of Echis ocellatus (Ocellated saw-scaled viper).